We begin with the raw amino-acid sequence, 120 residues long: FK506-binding protein 1B (120 aa).

The disordered stretch occupies residues 1 to 26 (MGLEKQTLRMGNGKDHPQPGDPVELN). The PPIase FKBP-type domain occupies 20–115 (GDPVELNYTG…VFEVELLKIK (96 aa)).

It belongs to the FKBP-type PPIase family. FKBP1 subfamily.

The enzyme catalyses [protein]-peptidylproline (omega=180) = [protein]-peptidylproline (omega=0). Inhibited by both FK506 and rapamycin. PPIases accelerate the folding of proteins. It catalyzes the cis-trans isomerization of proline imidic peptide bonds in oligopeptides. In Aspergillus fumigatus (strain ATCC MYA-4609 / CBS 101355 / FGSC A1100 / Af293) (Neosartorya fumigata), this protein is FK506-binding protein 1B (fpr1B).